The primary structure comprises 488 residues: MSLFDYTIKELEEKLHNKEITVEDLVKESYQRIHEVDQEVHAFLTLDEEKALEKARELDQLEDKTGILFGMPGGIKDNIVTKGLRTTCASQFLDNFNDPLYDATVVQKLQKENMVAVGKLNMDEFAMGSSNENSGYEPTRNPWNTEHVPGGSSGGSAAAVAAGEVLFTLGSDTGGSIRQPAAFCGVVGMKPTYGRVSRFGLVAFASSLDQIGPVTRTVEDNARVLEVIAGHDQMDTTSANVEVPSYTEALKQDVKGLKIAVPKEYLAEGVSKEVKDAILEALKVYESMGATWEEVSLPHSKYALATYYLLSSSEASANLARFDGVRYGVRSENADNMIDMFKKSRSEGFGEEVKRRIMLGTFALSSGYYDAYYKKAQKVRTLIKNDFDKILEEYDVIVGPTTPTPAFKVGEKTSDPLTMYANDILTIPVNLAGVPGISIPCGFSTEGLPIGLQIIGNYFDESTVYRTAYAYEQATEHHKKRPQLGGAK.

Active-site charge relay system residues include Lys-76 and Ser-152. Ser-176 acts as the Acyl-ester intermediate in catalysis.

It belongs to the amidase family. GatA subfamily. Heterotrimer of A, B and C subunits.

The enzyme catalyses L-glutamyl-tRNA(Gln) + L-glutamine + ATP + H2O = L-glutaminyl-tRNA(Gln) + L-glutamate + ADP + phosphate + H(+). In terms of biological role, allows the formation of correctly charged Gln-tRNA(Gln) through the transamidation of misacylated Glu-tRNA(Gln) in organisms which lack glutaminyl-tRNA synthetase. The reaction takes place in the presence of glutamine and ATP through an activated gamma-phospho-Glu-tRNA(Gln). This is Glutamyl-tRNA(Gln) amidotransferase subunit A from Oceanobacillus iheyensis (strain DSM 14371 / CIP 107618 / JCM 11309 / KCTC 3954 / HTE831).